The sequence spans 908 residues: 26S proteasome non-ATPase regulatory subunit 2 (908 aa).

Methionine 1 carries the post-translational modification N-acetylmethionine. Residues 1 to 51 (MEEGGRDKTPVQSQQPSATTPSGADEKSSGKERRDAGEKDKEQELSEEDKQ) form a disordered region. Residues threonine 9 and threonine 20 each carry the phosphothreonine modification. Over residues 10 to 22 (PVQSQQPSATTPS) the composition is skewed to polar residues. Residues 24 to 51 (ADEKSSGKERRDAGEKDKEQELSEEDKQ) are compositionally biased toward basic and acidic residues. A phosphoserine mark is found at serine 29 and serine 147. The residue at position 194 (tyrosine 194) is a Phosphotyrosine. Serine 361 and serine 363 each carry phosphoserine. PC repeat units lie at residues 409–442 (SAAASLGMILLWDVDGGLTQIDKYLYSSEDYIKS), 443–479 (GALLACGIVNSGVRNECDPALALLSDYVLHNSNTMRL), 480–514 (GSIFGLGLAYAGSNREDVLTLLLPVMGDSKSSMEV), 517–551 (VTALACGMIAVGSCNGDVTSTILQTIMEKSETELK), and 560–589 (LGLGLNHLGKGEAIEAILAALEVVSEPFRS). N6-acetyllysine is present on lysine 551. Positions 623 to 643 (KEKEEDKDKKEKKDKDKKEAP) are enriched in basic and acidic residues. The segment at 623–645 (KEKEEDKDKKEKKDKDKKEAPAD) is disordered. PC repeat units lie at residues 692–723 (LALALISVSNPRLNILDTLSKFSHDADPEVSY) and 742–757 (AAMLRQLAQYHAKDPN). Residues 708 to 903 (DTLSKFSHDA…LEGFVILRKN (196 aa)) are required for interaction with UBLCP1.

It belongs to the proteasome subunit S2 family. In terms of assembly, component of the 19S proteasome regulatory particle complex. The 26S proteasome consists of a 20S core particle (CP) and two 19S regulatory subunits (RP). The regulatory particle is made of a lid composed of 9 subunits, a base containing 6 ATPases and few additional components including PSMD2. Interacts with RPGRIP1L. Interacts with CRY1 in a KDM8-dependent manner. Interacts (via C-terminus) with phosphatase UBLCP1 (via ubiquitin-like domain); the interaction recruits UBLCP1 to the 19S regulatory particle where it dephosphorylates 19S subunit PSMC2/RPT1 which impairs PSMC2 ATPase activity and disrupts 26S proteasome assembly.

Its function is as follows. Component of the 26S proteasome, a multiprotein complex involved in the ATP-dependent degradation of ubiquitinated proteins. This complex plays a key role in the maintenance of protein homeostasis by removing misfolded or damaged proteins, which could impair cellular functions, and by removing proteins whose functions are no longer required. Therefore, the proteasome participates in numerous cellular processes, including cell cycle progression, apoptosis, or DNA damage repair. Binds to the intracellular domain of tumor necrosis factor type 1 receptor. The binding domain of TRAP1 and TRAP2 resides outside the death domain of TNFR1. The chain is 26S proteasome non-ATPase regulatory subunit 2 (Psmd2) from Mus musculus (Mouse).